A 647-amino-acid chain; its full sequence is DNA topoisomerase 4 subunit B (647 aa).

Residues Tyr11, Asn51, Asp78, 118–124, and Lys344 each bind ATP; that span reads GLHGVGS. Residues 391–401 are compositionally biased toward basic and acidic residues; sequence AARKARDESRN. Residues 391–421 are disordered; that stretch reads AARKARDESRNGKKNKKDKGLLSGKLTPAQS. In terms of domain architecture, Toprim spans 427-541; that stretch reads NELYLVEGDS…AGHVYIALPP (115 aa). The Mg(2+) site is built by Glu433, Asp506, and Asp508.

It belongs to the type II topoisomerase family. ParE type 2 subfamily. As to quaternary structure, heterotetramer composed of ParC and ParE. Mg(2+) serves as cofactor. It depends on Mn(2+) as a cofactor. The cofactor is Ca(2+).

It catalyses the reaction ATP-dependent breakage, passage and rejoining of double-stranded DNA.. Its activity is regulated as follows. Inhibited by quinolones, such as levofloxacin. Functionally, topoisomerase IV is essential for chromosome segregation. It relaxes supercoiled DNA. Performs the decatenation events required during the replication of a circular DNA molecule. The sequence is that of DNA topoisomerase 4 subunit B from Streptococcus pneumoniae serotype 4 (strain ATCC BAA-334 / TIGR4).